Here is a 62-residue protein sequence, read N- to C-terminus: Photosystem II reaction center protein Z (62 aa).

The next 2 helical transmembrane spans lie at 8 to 28 (AVFA…LVFA) and 41 to 61 (FSGT…NSLI).

The protein belongs to the PsbZ family. In terms of assembly, PSII is composed of 1 copy each of membrane proteins PsbA, PsbB, PsbC, PsbD, PsbE, PsbF, PsbH, PsbI, PsbJ, PsbK, PsbL, PsbM, PsbT, PsbY, PsbZ, Psb30/Ycf12, at least 3 peripheral proteins of the oxygen-evolving complex and a large number of cofactors. It forms dimeric complexes.

Its subcellular location is the plastid. It localises to the chloroplast thylakoid membrane. May control the interaction of photosystem II (PSII) cores with the light-harvesting antenna, regulates electron flow through the 2 photosystem reaction centers. PSII is a light-driven water plastoquinone oxidoreductase, using light energy to abstract electrons from H(2)O, generating a proton gradient subsequently used for ATP formation. This is Photosystem II reaction center protein Z from Hordeum vulgare (Barley).